We begin with the raw amino-acid sequence, 637 residues long: PTS system mannitol-specific EIICBA component (637 aa).

At Met-1–Asn-23 the chain is on the cytoplasmic side. Residues Phe-12 to Glu-341 enclose the PTS EIIC type-2 domain. The chain crosses the membrane as a helical span at residues Ile-24–Asn-45. Topologically, residues Glu-46–Ala-49 are periplasmic. The chain crosses the membrane as a helical span at residues Lys-50 to Lys-70. The Cytoplasmic segment spans residues Leu-71–Phe-133. The helical transmembrane segment at Ser-134–Glu-155 threads the bilayer. Residues Ala-156–Gly-164 lie on the Periplasmic side of the membrane. The chain crosses the membrane as a helical span at residues Val-165–Lys-185. The Cytoplasmic portion of the chain corresponds to Ile-186–Ala-272. Residues Val-273–Val-292 traverse the membrane as a helical segment. The Periplasmic segment spans residues Ser-293–Tyr-312. A helical membrane pass occupies residues Phe-313–Leu-334. Over Lys-335–Lys-637 the chain is Cytoplasmic. One can recognise a PTS EIIB type-2 domain in the interval Arg-378–Ala-473. Cys-384 acts as the Phosphocysteine intermediate; for EIIB activity in catalysis. Cys-384 is subject to Phosphocysteine; by EIIA. One can recognise a PTS EIIA type-2 domain in the interval Phe-494 to Arg-636. Catalysis depends on His-554, which acts as the Tele-phosphohistidine intermediate; for EIIA activity. His-554 carries the phosphohistidine; by HPr modification.

As to quaternary structure, homodimer. In terms of processing, an intramolecular phosphotransfer takes places between His-554 and Cys-384.

The protein localises to the cell inner membrane. The enzyme catalyses D-mannitol(out) + N(pros)-phospho-L-histidyl-[protein] = D-mannitol 1-phosphate(in) + L-histidyl-[protein]. Its function is as follows. The phosphoenolpyruvate-dependent sugar phosphotransferase system (sugar PTS), a major carbohydrate active transport system, catalyzes the phosphorylation of incoming sugar substrates concomitantly with their translocation across the cell membrane. This system is involved in D-mannitol transport. Also able to use D-mannonic acid. This Escherichia coli (strain K12) protein is PTS system mannitol-specific EIICBA component.